We begin with the raw amino-acid sequence, 493 residues long: MVKGKKPYIDRKKAVTFHLVHRSQHDPLVTDENAPQRVLLEAAARQQKPKDPEPPTDPAQRQEELKKFGIHFDDDYDYMQHLKKRENDVVWEFMENPNQARKQKVQDSEKPGPAPKLMLPSSVFASEFEESEGMLNKAAPQTLRLDWDPDVVAALDSDCENEELEDDFVIQAMAEGDSDDEEWDDEDGEEQSDMDFDSDDLNEDENEDELMDRLAPLMRERRFDDEEVKSRFTEYSMSSSVIRRNEQLSLLDDRFEKFYATYDDPELGDLALEDIEGNWHQKHPVVMQCFQEFKKKDKGIEYNKEWDRERIEKYRNVVEGEEDPTEELVEYEVDDPKQKKWDCESILSTYSNIYNHPKVIDEPRRSRRSSASTNPAPIQIDPKTGLPTNVLRGGVDGQLTAKALANLADESPAATGPKSLCAKSVLSTLSVLSIRPKDETHEEKKERKRLLKDYRNERRIEKKANTEAFKEEKKRQTHVKINQRTNQQGASIV.

Disordered stretches follow at residues 42 to 63, 97 to 119, and 170 to 207; these read AAARQQKPKDPEPPTDPAQRQE, PNQARKQKVQDSEKPGPAPKLML, and IQAMAEGDSDDEEWDDEDGEEQSDMDFDSDDLNEDENE. Over residues 176 to 207 the composition is skewed to acidic residues; sequence GDSDDEEWDDEDGEEQSDMDFDSDDLNEDENE. Ser-345, Ser-369, Ser-370, Ser-424, and Ser-427 each carry phosphoserine. The segment at 359–387 is disordered; it reads VIDEPRRSRRSSASTNPAPIQIDPKTGLP. Residues 437–468 are a coiled coil; the sequence is KDETHEEKKERKRLLKDYRNERRIEKKANTEA. Residues 465 to 474 are compositionally biased toward basic and acidic residues; the sequence is NTEAFKEEKK. A disordered region spans residues 465 to 493; the sequence is NTEAFKEEKKRQTHVKINQRTNQQGASIV. Positions 479-493 are enriched in polar residues; sequence VKINQRTNQQGASIV.

Belongs to the LTV1 family. In terms of assembly, interacts with RpS3; the interaction is RNA-independent. Associates with free 40S ribosome subunits.

It localises to the cytoplasm. Necessary for the biogenesis of 40S ribosome subunits by regulating pre-rRNA processing. Non-ribosomal factor required for efficient nuclear export of the ribosomal 40S subunit. Necessary for endoreplication driven by Myc. This is Protein LTV1 homolog from Drosophila melanogaster (Fruit fly).